Consider the following 101-residue polypeptide: Protein Tat (101 aa).

The tract at residues 1-20 is disordered; the sequence is MEVVDPNLDPWKHPGSQPET. Positions 1–24 are interaction with human CREBBP; the sequence is MEVVDPNLDPWKHPGSQPETPCNK. A transactivation region spans residues 1–48; it reads MEVVDPNLDPWKHPGSQPETPCNKCYCKKCCFHCQLCFTRKGLGISYG. 3 residues coordinate Zn(2+): C22, C25, and C27. The interval 22–37 is cysteine-rich; the sequence is CNKCYCKKCCFHCQLC. At K28 the chain carries N6-acetyllysine; by host PCAF. The Zn(2+) site is built by C30, H33, C34, and C37. The segment at 38–48 is core; the sequence is FTRKGLGISYG. The disordered stretch occupies residues 47–101; that stretch reads YGRKKRRQRRRTPQSGEVHQDPVSKQPLSQTRGDPKGPEESKKKVESKTKTDPSD. Over residues 48 to 58 the composition is skewed to basic residues; the sequence is GRKKRRQRRRT. Positions 49–57 match the Nuclear localization signal, RNA-binding (TAR), and protein transduction motif; sequence RKKRRQRRR. The interaction with the host capping enzyme RNGTT stretch occupies residues 49–86; the sequence is RKKRRQRRRTPQSGEVHQDPVSKQPLSQTRGDPKGPEE. An N6-acetyllysine; by host EP300 and GCN5L2 mark is found at K50 and K51. R52 and R53 each carry asymmetric dimethylarginine; by host PRMT6. K71 is covalently cross-linked (Glycyl lysine isopeptide (Lys-Gly) (interchain with G-Cter in ubiquitin)). Positions 78 to 80 match the Cell attachment site motif; the sequence is RGD. Positions 79–101 are enriched in basic and acidic residues; that stretch reads GDPKGPEESKKKVESKTKTDPSD.

It belongs to the lentiviruses Tat family. As to quaternary structure, interacts with host CCNT1. Associates with the P-TEFb complex composed at least of Tat, P-TEFb (CDK9 and CCNT1), TAR RNA, RNA Pol II. Recruits the HATs CREBBP, TAF1/TFIID, EP300, PCAF and GCN5L2. Interacts with host KAT5/Tip60; this interaction targets the latter to degradation. Interacts with the host deacetylase SIRT1. Interacts with host capping enzyme RNGTT; this interaction stimulates RNGTT. Binds to host KDR, and to the host integrins ITGAV/ITGB3 and ITGA5/ITGB1. Interacts with host KPNB1/importin beta-1 without previous binding to KPNA1/importin alpha-1. Interacts with EIF2AK2. Interacts with host nucleosome assembly protein NAP1L1; this interaction may be required for the transport of Tat within the nucleus, since the two proteins interact at the nuclear rim. Interacts with host C1QBP/SF2P32; this interaction involves lysine-acetylated Tat. Interacts with the host chemokine receptors CCR2, CCR3 and CXCR4. Interacts with host DPP4/CD26; this interaction may trigger an anti-proliferative effect. Interacts with host LDLR. Interacts with the host extracellular matrix metalloproteinase MMP1. Interacts with host PRMT6; this interaction mediates Tat's methylation. Interacts with, and is ubiquitinated by MDM2/Hdm2. Interacts with host PSMC3 and HTATIP2. Interacts with STAB1; this interaction may overcome SATB1-mediated repression of IL2 and IL2RA (interleukin) in T cells by binding to the same domain than HDAC1. Interacts (when acetylated) with human CDK13, thereby increasing HIV-1 mRNA splicing and promoting the production of the doubly spliced HIV-1 protein Nef. Interacts with host TBP; this interaction modulates the activity of transcriptional pre-initiation complex. Interacts with host RELA. Interacts with host PLSCR1; this interaction negatively regulates Tat transactivation activity by altering its subcellular distribution. In terms of processing, asymmetrical arginine methylation by host PRMT6 seems to diminish the transactivation capacity of Tat and affects the interaction with host CCNT1. Acetylation by EP300, CREBBP, GCN5L2/GCN5 and PCAF regulates the transactivation activity of Tat. EP300-mediated acetylation of Lys-50 promotes dissociation of Tat from the TAR RNA through the competitive binding to PCAF's bromodomain. In addition, the non-acetylated Tat's N-terminus can also interact with PCAF. PCAF-mediated acetylation of Lys-28 enhances Tat's binding to CCNT1. Lys-50 is deacetylated by SIRT1. Post-translationally, polyubiquitination by host MDM2 does not target Tat to degradation, but activates its transactivation function and fosters interaction with CCNT1 and TAR RNA. In terms of processing, phosphorylated by EIF2AK2 on serine and threonine residues adjacent to the basic region important for TAR RNA binding and function. Phosphorylation of Tat by EIF2AK2 is dependent on the prior activation of EIF2AK2 by dsRNA.

The protein resides in the host nucleus. The protein localises to the host nucleolus. Its subcellular location is the host cytoplasm. It localises to the secreted. Functionally, transcriptional activator that increases RNA Pol II processivity, thereby increasing the level of full-length viral transcripts. Recognizes a hairpin structure at the 5'-LTR of the nascent viral mRNAs referred to as the transactivation responsive RNA element (TAR) and recruits the cyclin T1-CDK9 complex (P-TEFb complex) that will in turn hyperphosphorylate the RNA polymerase II to allow efficient elongation. The CDK9 component of P-TEFb and other Tat-activated kinases hyperphosphorylate the C-terminus of RNA Pol II that becomes stabilized and much more processive. Other factors such as HTATSF1/Tat-SF1, SUPT5H/SPT5, and HTATIP2 are also important for Tat's function. Besides its effect on RNA Pol II processivity, Tat induces chromatin remodeling of proviral genes by recruiting the histone acetyltransferases (HATs) CREBBP, EP300 and PCAF to the chromatin. This also contributes to the increase in proviral transcription rate, especially when the provirus integrates in transcriptionally silent region of the host genome. To ensure maximal activation of the LTR, Tat mediates nuclear translocation of NF-kappa-B by interacting with host RELA. Through its interaction with host TBP, Tat may also modulate transcription initiation. Tat can reactivate a latently infected cell by penetrating in it and transactivating its LTR promoter. In the cytoplasm, Tat is thought to act as a translational activator of HIV-1 mRNAs. Extracellular circulating Tat can be endocytosed by surrounding uninfected cells via the binding to several surface receptors such as CD26, CXCR4, heparan sulfate proteoglycans (HSPG) or LDLR. Neurons are rarely infected, but they internalize Tat via their LDLR. Through its interaction with nuclear HATs, Tat is potentially able to control the acetylation-dependent cellular gene expression. Modulates the expression of many cellular genes involved in cell survival, proliferation or in coding for cytokines or cytokine receptors. Tat plays a role in T-cell and neurons apoptosis. Tat induced neurotoxicity and apoptosis probably contribute to neuroAIDS. Circulating Tat also acts as a chemokine-like and/or growth factor-like molecule that binds to specific receptors on the surface of the cells, affecting many cellular pathways. In the vascular system, Tat binds to ITGAV/ITGB3 and ITGA5/ITGB1 integrins dimers at the surface of endothelial cells and competes with bFGF for heparin-binding sites, leading to an excess of soluble bFGF. This Homo sapiens (Human) protein is Protein Tat.